A 42-amino-acid polypeptide reads, in one-letter code: Histone H1B (42 aa).

One can recognise an H15 domain in the interval 1 to 42 (TYYELIKAAILALKERNGSSAQAIKKYILENNKIEFQQTFLR).

It belongs to the histone H1/H5 family.

The protein resides in the nucleus. It localises to the chromosome. Histones H1 are necessary for the condensation of nucleosome chains into higher-order structures. The chain is Histone H1B from Olisthodiscus luteus (Marine phytoflagellate).